Reading from the N-terminus, the 775-residue chain is MASLIYRQLLTNSYSVDLHDEIEQIGSEKTQNVTVNPGPFAQTRYAPVNWGHGEINDSTTVEPILDGPYQPTTFTPPIDYWILINSNTNGVVYESTNNSDFWTAVVAVEPHVNPVDRQYTVFGENKQFNVRNDSDKWKFLEMFRSSSQNEFYNRRTLTSHTKLVGILKYGGRIWTFHGETPRATTDSSNTANLNDISIIVHSEFYIIPRSQESKCNEYINNGLPPIQNTRNVVPLSLSSRSIQYKRAQVNEDITISKTSLWKEMQYNSDIIIRFKFGNSIVKLGGLGYKWSEISFKAANYQYNYLRDGEQVTAHTTCSVNGVNNFSYNGGSLPTDFSVSRYEVIKENSYVYVDYWDDSKAFRNMVYVRSLAANLNSVKCTGGSYNFSLPVGAWPVMNGGAVSLHFAGVTLSTQFTDFVSLNSLRFRFSLTVDEPSFSILRTRTVNLYGLPAANPNNGNEYYEISGRFSLISLVPTNDDYQTPIMNSVTVRQDLERQLTDLREEFNSLSQEIAMSQLIDLALLPLDMFSMFSGIKSTIDLTKSMATSVMKKFRKSKLATSISEMTNSLSDAASSASRSVSIRSNISTISNLTNVSNDVSNVTNSLNDISTQTSTISKKLRLREMITQTEGMSFDDISAAVLKTKIDMSTQIGKNTLPDIVTEASEKFIPKRSYRILKDDEVMEINTEGKVFAYKIDTLNEVPFDVNKFAELVTNSPVISAIIDFKTLKNLNDNYGITRIEALNLIKSNPNVLRNFINQNNPIIRNRIEQLILQCKL.

The interval 65-223 (LDGPYQPTTF…KCNEYINNGL (159 aa)) is spike head. Residues 247 to 478 (AQVNEDITIS…LISLVPTNDD (232 aa)) form a spike body and stalk (antigen domain) region. The short motif at 307-309 (DGE) is the DGE motif; interaction with ITGA2/ITGB1 heterodimer element. Cys-317 and Cys-379 are oxidised to a cystine. A hydrophobic; possible role in virus entry into host cell region spans residues 388–408 (LPVGAWPVMNGGAVSLHFAGV). A YGL motif; interaction with ITGA4 motif is present at residues 447–449 (YGL). The stretch at 483–510 (IMNSVTVRQDLERQLTDLREEFNSLSQE) forms a coiled coil. Positions 509–775 (QEIAMSQLID…IEQLILQCKL (267 aa)) are spike foot. Residues 643-645 (KID) carry the KID motif; interaction with HSPA8 motif.

The protein belongs to the rotavirus VP4 family. As to quaternary structure, homotrimer. VP4 adopts a dimeric appearance above the capsid surface, while forming a trimeric base anchored inside the capsid layer. Only hints of the third molecule are observed above the capsid surface. It probably performs a series of molecular rearrangements during viral entry. Prior to trypsin cleavage, it is flexible. The priming trypsin cleavage triggers its rearrangement into rigid spikes with approximate two-fold symmetry of their protruding parts. After an unknown second triggering event, cleaved VP4 may undergo another rearrangement, in which two VP5* subunits fold back on themselves and join a third subunit to form a tightly associated trimer, shaped like a folded umbrella. Interacts with VP6. Interacts with VP7. Homotrimer. The trimer is coiled-coil stabilized by its C-terminus, however, its N-terminus, known as antigen domain or 'body', seems to be flexible allowing it to self-associate either as a dimer or a trimer. Proteolytic cleavage by trypsin results in activation of VP4 functions and greatly increases infectivity. The penetration into the host cell is dependent on trypsin treatment of VP4. It produces two peptides, VP5* and VP8* that remain associated with the virion. Cleavage of VP4 by trypsin probably occurs in vivo in the lumen of the intestine prior to infection of enterocytes. Trypsin seems to be incorporated into the three-layered viral particles but remains inactive as long as the viral outer capsid is intact and would only be activated upon the solubilization of the latter.

It is found in the virion. The protein resides in the host rough endoplasmic reticulum. Its subcellular location is the host cell membrane. The protein localises to the host cytoplasm. It localises to the host cytoskeleton. It is found in the host endoplasmic reticulum-Golgi intermediate compartment. Functionally, spike-forming protein that mediates virion attachment to the host epithelial cell receptors and plays a major role in cell penetration, determination of host range restriction and virulence. Rotavirus attachment and entry into the host cell probably involves multiple sequential contacts between the outer capsid proteins VP4 and VP7, and the cell receptors. It is subsequently lost, together with VP7, following virus entry into the host cell. Following entry into the host cell, low intracellular or intravesicular Ca(2+) concentration probably causes the calcium-stabilized VP7 trimers to dissociate from the virion. This step is probably necessary for the membrane-disrupting entry step and the release of VP4, which is locked onto the virion by VP7. During the virus exit from the host cell, VP4 seems to be required to target the newly formed virions to the host cell lipid rafts. Its function is as follows. Forms the spike 'foot' and 'body' and acts as a membrane permeabilization protein that mediates release of viral particles from endosomal compartments into the cytoplasm. During entry, the part of VP5* that protrudes from the virus folds back on itself and reorganizes from a local dimer to a trimer. This reorganization may be linked to membrane penetration by exposing VP5* hydrophobic region. In integrin-dependent strains, VP5* targets the integrin heterodimer ITGA2/ITGB1 for cell attachment. Forms the head of the spikes and mediates the recognition of specific host cell surface glycans. It is the viral hemagglutinin and an important target of neutralizing antibodies. In sialic acid-dependent strains, VP8* binds to host cell sialic acid, most probably a ganglioside, providing the initial contact. In some other strains, VP8* mediates the attachment to histo-blood group antigens (HBGAs) for viral entry. This is Outer capsid protein VP4 from Homo sapiens (Human).